We begin with the raw amino-acid sequence, 179 residues long: Large ribosomal subunit protein uL6 (179 aa).

It belongs to the universal ribosomal protein uL6 family. In terms of assembly, part of the 50S ribosomal subunit.

In terms of biological role, this protein binds to the 23S rRNA, and is important in its secondary structure. It is located near the subunit interface in the base of the L7/L12 stalk, and near the tRNA binding site of the peptidyltransferase center. This Chlorobium chlorochromatii (strain CaD3) protein is Large ribosomal subunit protein uL6.